Here is a 96-residue protein sequence, read N- to C-terminus: Probable quinol oxidase subunit 4 (96 aa).

The next 3 membrane-spanning stretches (helical) occupy residues 8-28, 36-56, and 68-88; these read TVGF…TLYT, VTII…MFMH, and FKVI…YWVM.

Belongs to the cytochrome c oxidase bacterial subunit 4 family.

The protein resides in the cell membrane. The catalysed reaction is 2 a quinol + O2 = 2 a quinone + 2 H2O. Its function is as follows. Catalyzes quinol oxidation with the concomitant reduction of oxygen to water. The chain is Probable quinol oxidase subunit 4 (qoxD) from Staphylococcus epidermidis (strain ATCC 35984 / DSM 28319 / BCRC 17069 / CCUG 31568 / BM 3577 / RP62A).